We begin with the raw amino-acid sequence, 101 residues long: MYIENFLLLASALFCIGIYGLLTSRNIVRVLMCLELCLNAININFIAFSNFIDYEKINGQVIAIFIMTIAAAEAAIGLALVLTIYRNRETVDIENFDLLKG.

3 consecutive transmembrane segments (helical) span residues 2–22 (YIEN…YGLL), 32–52 (MCLE…SNFI), and 61–81 (VIAI…LALV).

This sequence belongs to the complex I subunit 4L family. In terms of assembly, NDH is composed of at least 16 different subunits, 5 of which are encoded in the nucleus.

The protein resides in the plastid. Its subcellular location is the chloroplast thylakoid membrane. The enzyme catalyses a plastoquinone + NADH + (n+1) H(+)(in) = a plastoquinol + NAD(+) + n H(+)(out). The catalysed reaction is a plastoquinone + NADPH + (n+1) H(+)(in) = a plastoquinol + NADP(+) + n H(+)(out). In terms of biological role, NDH shuttles electrons from NAD(P)H:plastoquinone, via FMN and iron-sulfur (Fe-S) centers, to quinones in the photosynthetic chain and possibly in a chloroplast respiratory chain. The immediate electron acceptor for the enzyme in this species is believed to be plastoquinone. Couples the redox reaction to proton translocation, and thus conserves the redox energy in a proton gradient. This Mesostigma viride (Green alga) protein is NAD(P)H-quinone oxidoreductase subunit 4L, chloroplastic.